The sequence spans 674 residues: Metal-nicotianamine transporter YSL2 (674 aa).

Positions 1–29 (MEAAAPEIERCDAGDVESDHDGAAAAAER) are disordered. Residues 7-22 (EIERCDAGDVESDHDG) are compositionally biased toward basic and acidic residues. The next 14 helical transmembrane spans lie at 41–61 (GMVA…KLAL), 64–84 (GIIP…LRGW), 118–138 (CAVA…LLAL), 162–182 (GVGW…LNLL), 224–244 (GFLN…FYTG), 283–303 (LVNL…WPLI), 329–349 (FMCV…VTGI), 392–412 (LAYA…PIMF), 420–440 (VVVA…GTGL), 452–472 (IALF…AGLV), 506–526 (VGQA…FLLF), 559–579 (SALP…SVLI), 604–624 (FLVG…VFAW), and 633–653 (ALLV…WMFP).

The protein belongs to the YSL (TC 2.A.67.2) family. As to expression, expressed in phloem cells of vascular bundles in leaves and leaf sheaths. Expressed at low levels in phloem companion cells in the central cylinder of roots, but not in the epidermal or cortical cells.

It is found in the cell membrane. In terms of biological role, involved in the phloem transport of iron and manganese and their translocation into the grain. Transports iron- and manganese-nicotianamine chelates, but not iron-phytosiderophore. This is Metal-nicotianamine transporter YSL2 (YSL2) from Oryza sativa subsp. japonica (Rice).